A 368-amino-acid chain; its full sequence is 2-aminoethylphosphonate--pyruvate transaminase (368 aa).

Lysine 192 carries the N6-(pyridoxal phosphate)lysine modification.

This sequence belongs to the class-V pyridoxal-phosphate-dependent aminotransferase family. PhnW subfamily. In terms of assembly, homodimer. Pyridoxal 5'-phosphate is required as a cofactor.

It catalyses the reaction (2-aminoethyl)phosphonate + pyruvate = phosphonoacetaldehyde + L-alanine. In terms of biological role, involved in phosphonate degradation. This Pseudomonas putida (strain ATCC 47054 / DSM 6125 / CFBP 8728 / NCIMB 11950 / KT2440) protein is 2-aminoethylphosphonate--pyruvate transaminase.